Reading from the N-terminus, the 446-residue chain is CBL-interacting serine/threonine-protein kinase 24 (446 aa).

The region spanning 11–264 is the Protein kinase domain; the sequence is YEVGRTIGEG…IQGIKKDPWF (254 aa). Residues 17–25 and K40 contribute to the ATP site; that span reads IGEGTFAKV. The active-site Proton acceptor is the D134. Positions 152–179 are activation loop; sequence DFGLSALPQEGVELLRTTCGTPNYVAPE. S156 bears the Phosphoserine mark. T168 is subject to Phosphothreonine. The NAF domain maps to 305–329; the sequence is EGPLMMNAFEMITLSQGLNLSALFD. The segment at 336–365 is PPI; sequence KRQTRFVSRREPSEIIANIEAVANSMGFKS.

Belongs to the protein kinase superfamily. CAMK Ser/Thr protein kinase family. SNF1 subfamily. Interacts with CBL1, CBL2, CBL4/SOS3, CBL5, CBL9, CBL10 and with the protein phosphatase 2C ABI2. Requires Mn(2+) as cofactor. In terms of processing, autophosphorylated.

The protein resides in the cytoplasm. It is found in the nucleus. It catalyses the reaction L-seryl-[protein] + ATP = O-phospho-L-seryl-[protein] + ADP + H(+). It carries out the reaction L-threonyl-[protein] + ATP = O-phospho-L-threonyl-[protein] + ADP + H(+). Functionally, involved in the regulatory pathway for the control of intracellular Na(+) and K(+) homeostasis and salt tolerance. Activates the vacuolar H(+)/Ca(2+) antiporter CAX1 and operates in synergy with CBL4/SOS3 to activate the plasma membrane Na(+)/H(+) antiporter SOS1. CIPK serine-threonine protein kinases interact with CBL proteins. Binding of a CBL protein to the regulatory NAF domain of CIPK protein lead to the activation of the kinase in a calcium-dependent manner. Phosphorylates CBL1, CBL4 and CBL10. This Arabidopsis thaliana (Mouse-ear cress) protein is CBL-interacting serine/threonine-protein kinase 24 (CIPK24).